The following is a 286-amino-acid chain: UDP-3-O-acyl-N-acetylglucosamine deacetylase (286 aa).

Residues His79, His237, and Asp241 each coordinate Zn(2+). The Proton donor role is filled by His264.

Belongs to the LpxC family. Zn(2+) is required as a cofactor.

It catalyses the reaction a UDP-3-O-[(3R)-3-hydroxyacyl]-N-acetyl-alpha-D-glucosamine + H2O = a UDP-3-O-[(3R)-3-hydroxyacyl]-alpha-D-glucosamine + acetate. It participates in glycolipid biosynthesis; lipid IV(A) biosynthesis; lipid IV(A) from (3R)-3-hydroxytetradecanoyl-[acyl-carrier-protein] and UDP-N-acetyl-alpha-D-glucosamine: step 2/6. Its function is as follows. Catalyzes the hydrolysis of UDP-3-O-myristoyl-N-acetylglucosamine to form UDP-3-O-myristoylglucosamine and acetate, the committed step in lipid A biosynthesis. The chain is UDP-3-O-acyl-N-acetylglucosamine deacetylase from Chlamydia muridarum (strain MoPn / Nigg).